Reading from the N-terminus, the 396-residue chain is uncharacterized protein (396 aa).

The protein belongs to the mycobacterial PPE family.

This is an uncharacterized protein from Mycobacterium tuberculosis (strain CDC 1551 / Oshkosh).